The sequence spans 280 residues: Acetyl-coenzyme A carboxylase carboxyl transferase subunit beta (280 aa).

Residues 24 to 280 enclose the CoA carboxyltransferase N-terminal domain; that stretch reads AWIKCDKCKN…IYTLIRHTHG (257 aa). 4 residues coordinate Zn(2+): Cys28, Cys31, Cys47, and Cys50. Residues 28-50 form a C4-type zinc finger; sequence CDKCKNILYIEDLLKNLKICPHC.

It belongs to the AccD/PCCB family. As to quaternary structure, acetyl-CoA carboxylase is a heterohexamer composed of biotin carboxyl carrier protein (AccB), biotin carboxylase (AccC) and two subunits each of ACCase subunit alpha (AccA) and ACCase subunit beta (AccD). Zn(2+) is required as a cofactor.

The protein localises to the cytoplasm. It catalyses the reaction N(6)-carboxybiotinyl-L-lysyl-[protein] + acetyl-CoA = N(6)-biotinyl-L-lysyl-[protein] + malonyl-CoA. It functions in the pathway lipid metabolism; malonyl-CoA biosynthesis; malonyl-CoA from acetyl-CoA: step 1/1. In terms of biological role, component of the acetyl coenzyme A carboxylase (ACC) complex. Biotin carboxylase (BC) catalyzes the carboxylation of biotin on its carrier protein (BCCP) and then the CO(2) group is transferred by the transcarboxylase to acetyl-CoA to form malonyl-CoA. The sequence is that of Acetyl-coenzyme A carboxylase carboxyl transferase subunit beta from Sulfurihydrogenibium sp. (strain YO3AOP1).